Reading from the N-terminus, the 32-residue chain is Photosystem II reaction center protein T (32 aa).

Residues 3 to 23 form a helical membrane-spanning segment; it reads ALVYTFLLIGTLMVIFFAVFF.

It belongs to the PsbT family. In terms of assembly, PSII is composed of 1 copy each of membrane proteins PsbA, PsbB, PsbC, PsbD, PsbE, PsbF, PsbH, PsbI, PsbJ, PsbK, PsbL, PsbM, PsbT, PsbX, PsbY, PsbZ, Psb30/Ycf12, at least 3 peripheral proteins of the oxygen-evolving complex and a large number of cofactors. It forms dimeric complexes.

The protein resides in the plastid. The protein localises to the chloroplast thylakoid membrane. Functionally, found at the monomer-monomer interface of the photosystem II (PS II) dimer, plays a role in assembly and dimerization of PSII. PSII is a light-driven water plastoquinone oxidoreductase, using light energy to abstract electrons from H(2)O, generating a proton gradient subsequently used for ATP formation. The sequence is that of Photosystem II reaction center protein T from Thalassiosira pseudonana (Marine diatom).